We begin with the raw amino-acid sequence, 331 residues long: ATPase GET3 (331 aa).

32–39 (KGGVGKTT) is an ATP binding site. D61 is a catalytic residue. E235 and N262 together coordinate ATP. Zn(2+) is bound by residues C273 and C276.

Belongs to the arsA ATPase family. Homodimer.

The protein localises to the cytoplasm. The protein resides in the endoplasmic reticulum. ATPase required for the post-translational delivery of tail-anchored (TA) proteins to the endoplasmic reticulum. Recognizes and selectively binds the transmembrane domain of TA proteins in the cytosol. This complex then targets to the endoplasmic reticulum by membrane-bound receptors, where the tail-anchored protein is released for insertion. This process is regulated by ATP binding and hydrolysis. ATP binding drives the homodimer towards the closed dimer state, facilitating recognition of newly synthesized TA membrane proteins. ATP hydrolysis is required for insertion. Subsequently, the homodimer reverts towards the open dimer state, lowering its affinity for the membrane-bound receptor, and returning it to the cytosol to initiate a new round of targeting. The protein is ATPase GET3 of Malassezia globosa (strain ATCC MYA-4612 / CBS 7966) (Dandruff-associated fungus).